The sequence spans 421 residues: Tyrosine--tRNA ligase (421 aa).

Tyr-38 is an L-tyrosine binding site. Residues 43 to 52 (PTGDSLHIGH) carry the 'HIGH' region motif. 2 residues coordinate L-tyrosine: Tyr-169 and Gln-173. Residues 231–235 (KFGKS) carry the 'KMSKS' region motif. An ATP-binding site is contributed by Lys-234. The S4 RNA-binding domain maps to 353 to 419 (KNLVDFLVDT…GKKKYTLVHI (67 aa)).

Belongs to the class-I aminoacyl-tRNA synthetase family. TyrS type 1 subfamily. In terms of assembly, homodimer.

The protein localises to the cytoplasm. The catalysed reaction is tRNA(Tyr) + L-tyrosine + ATP = L-tyrosyl-tRNA(Tyr) + AMP + diphosphate + H(+). Functionally, catalyzes the attachment of tyrosine to tRNA(Tyr) in a two-step reaction: tyrosine is first activated by ATP to form Tyr-AMP and then transferred to the acceptor end of tRNA(Tyr). The chain is Tyrosine--tRNA ligase from Lactobacillus delbrueckii subsp. bulgaricus (strain ATCC BAA-365 / Lb-18).